We begin with the raw amino-acid sequence, 251 residues long: Diphthine synthase (251 aa).

Residues Leu-9, Asp-85, Val-88, 113-114 (SI), Leu-165, Ala-202, and His-227 each bind S-adenosyl-L-methionine.

The protein belongs to the diphthine synthase family. In terms of assembly, homodimer.

It carries out the reaction 2-[(3S)-amino-3-carboxypropyl]-L-histidyl-[translation elongation factor 2] + 3 S-adenosyl-L-methionine = diphthine-[translation elongation factor 2] + 3 S-adenosyl-L-homocysteine + 3 H(+). It participates in protein modification; peptidyl-diphthamide biosynthesis. S-adenosyl-L-methionine-dependent methyltransferase that catalyzes the trimethylation of the amino group of the modified target histidine residue in translation elongation factor 2 (EF-2), to form an intermediate called diphthine. The three successive methylation reactions represent the second step of diphthamide biosynthesis. In Methanosphaerula palustris (strain ATCC BAA-1556 / DSM 19958 / E1-9c), this protein is Diphthine synthase.